A 509-amino-acid polypeptide reads, in one-letter code: Histidine ammonia-lyase (509 aa).

Positions 142–144 (ASG) form a cross-link, 5-imidazolinone (Ala-Gly). Residue S143 is modified to 2,3-didehydroalanine (Ser).

It belongs to the PAL/histidase family. Post-translationally, contains an active site 4-methylidene-imidazol-5-one (MIO), which is formed autocatalytically by cyclization and dehydration of residues Ala-Ser-Gly.

It localises to the cytoplasm. The catalysed reaction is L-histidine = trans-urocanate + NH4(+). It participates in amino-acid degradation; L-histidine degradation into L-glutamate; N-formimidoyl-L-glutamate from L-histidine: step 1/3. This is Histidine ammonia-lyase from Pseudomonas aeruginosa (strain LESB58).